We begin with the raw amino-acid sequence, 490 residues long: Glucose-6-phosphate 1-dehydrogenase (490 aa).

NADP(+) is bound by residues R49, 91–92, and K146; that span reads DV. Residues H176, K180, E214, and D233 each coordinate substrate. The active-site Proton acceptor is H238. Substrate is bound by residues K338 and K343.

It belongs to the glucose-6-phosphate dehydrogenase family.

The catalysed reaction is D-glucose 6-phosphate + NADP(+) = 6-phospho-D-glucono-1,5-lactone + NADPH + H(+). It functions in the pathway carbohydrate degradation; pentose phosphate pathway; D-ribulose 5-phosphate from D-glucose 6-phosphate (oxidative stage): step 1/3. In terms of biological role, catalyzes the oxidation of glucose 6-phosphate to 6-phosphogluconolactone. The sequence is that of Glucose-6-phosphate 1-dehydrogenase from Buchnera aphidicola subsp. Schizaphis graminum (strain Sg).